The primary structure comprises 328 residues: Serine protease 27 (328 aa).

Positions 1 to 22 are cleaved as a signal peptide; it reads MRQPHIAALLLLPLLLRSGTEG. The propeptide at 23-37 is activation peptide; the sequence is ARTLRACGHPKMFNR. In terms of domain architecture, Peptidase S1 spans 38–280; sequence MVGGENALEG…HHKWIHQIIP (243 aa). Residues cysteine 63 and cysteine 79 are joined by a disulfide bond. Histidine 78 functions as the Charge relay system in the catalytic mechanism. Residue asparagine 82 is glycosylated (N-linked (GlcNAc...) asparagine). Aspartate 127 functions as the Charge relay system in the catalytic mechanism. 3 cysteine pairs are disulfide-bonded: cysteine 161-cysteine 238, cysteine 194-cysteine 217, and cysteine 228-cysteine 256. The Charge relay system role is filled by serine 232.

Belongs to the peptidase S1 family.

It is found in the secreted. The polypeptide is Serine protease 27 (Prss27) (Mus musculus (Mouse)).